Here is a 195-residue protein sequence, read N- to C-terminus: ATP-dependent Clp protease proteolytic subunit (195 aa).

Serine 98 functions as the Nucleophile in the catalytic mechanism. Residue histidine 123 is part of the active site.

This sequence belongs to the peptidase S14 family. Fourteen ClpP subunits assemble into 2 heptameric rings which stack back to back to give a disk-like structure with a central cavity, resembling the structure of eukaryotic proteasomes.

The protein resides in the cytoplasm. The enzyme catalyses Hydrolysis of proteins to small peptides in the presence of ATP and magnesium. alpha-casein is the usual test substrate. In the absence of ATP, only oligopeptides shorter than five residues are hydrolyzed (such as succinyl-Leu-Tyr-|-NHMec, and Leu-Tyr-Leu-|-Tyr-Trp, in which cleavage of the -Tyr-|-Leu- and -Tyr-|-Trp bonds also occurs).. Functionally, cleaves peptides in various proteins in a process that requires ATP hydrolysis. Has a chymotrypsin-like activity. Plays a major role in the degradation of misfolded proteins. In Staphylococcus haemolyticus (strain JCSC1435), this protein is ATP-dependent Clp protease proteolytic subunit.